We begin with the raw amino-acid sequence, 97 residues long: Aspartyl/glutamyl-tRNA(Asn/Gln) amidotransferase subunit C (97 aa).

This sequence belongs to the GatC family. In terms of assembly, heterotrimer of A, B and C subunits.

The enzyme catalyses L-glutamyl-tRNA(Gln) + L-glutamine + ATP + H2O = L-glutaminyl-tRNA(Gln) + L-glutamate + ADP + phosphate + H(+). It catalyses the reaction L-aspartyl-tRNA(Asn) + L-glutamine + ATP + H2O = L-asparaginyl-tRNA(Asn) + L-glutamate + ADP + phosphate + 2 H(+). Its function is as follows. Allows the formation of correctly charged Asn-tRNA(Asn) or Gln-tRNA(Gln) through the transamidation of misacylated Asp-tRNA(Asn) or Glu-tRNA(Gln) in organisms which lack either or both of asparaginyl-tRNA or glutaminyl-tRNA synthetases. The reaction takes place in the presence of glutamine and ATP through an activated phospho-Asp-tRNA(Asn) or phospho-Glu-tRNA(Gln). This chain is Aspartyl/glutamyl-tRNA(Asn/Gln) amidotransferase subunit C, found in Roseiflexus sp. (strain RS-1).